Here is a 272-residue protein sequence, read N- to C-terminus: Dermonecrotic toxin SpeSicTox-betaIB1a (272 aa).

Residue H5 is part of the active site. Mg(2+) contacts are provided by E25 and D27. The Nucleophile role is filled by H41. 2 disulfide bridges follow: C45/C51 and C47/C191. D85 serves as a coordination point for Mg(2+).

It belongs to the arthropod phospholipase D family. Class II subfamily. It depends on Mg(2+) as a cofactor. Expressed by the venom gland.

The protein localises to the secreted. The catalysed reaction is an N-(acyl)-sphingosylphosphocholine = an N-(acyl)-sphingosyl-1,3-cyclic phosphate + choline. It catalyses the reaction an N-(acyl)-sphingosylphosphoethanolamine = an N-(acyl)-sphingosyl-1,3-cyclic phosphate + ethanolamine. It carries out the reaction a 1-acyl-sn-glycero-3-phosphocholine = a 1-acyl-sn-glycero-2,3-cyclic phosphate + choline. The enzyme catalyses a 1-acyl-sn-glycero-3-phosphoethanolamine = a 1-acyl-sn-glycero-2,3-cyclic phosphate + ethanolamine. Dermonecrotic toxins cleave the phosphodiester linkage between the phosphate and headgroup of certain phospholipids (sphingolipid and lysolipid substrates), forming an alcohol (often choline) and a cyclic phosphate. This toxin acts on sphingomyelin (SM). It may also act on ceramide phosphoethanolamine (CPE), lysophosphatidylcholine (LPC) and lysophosphatidylethanolamine (LPE), but not on lysophosphatidylserine (LPS), and lysophosphatidylglycerol (LPG). It acts by transphosphatidylation, releasing exclusively cyclic phosphate products as second products. Induces dermonecrosis, hemolysis, increased vascular permeability, edema, inflammatory response, and platelet aggregation. This is Dermonecrotic toxin SpeSicTox-betaIB1a from Sicarius peruensis (Six-eyed sand spider).